The sequence spans 208 residues: Protein-L-isoaspartate O-methyltransferase (208 aa).

Residue Ser-59 is part of the active site.

Belongs to the methyltransferase superfamily. L-isoaspartyl/D-aspartyl protein methyltransferase family.

It is found in the cytoplasm. The catalysed reaction is [protein]-L-isoaspartate + S-adenosyl-L-methionine = [protein]-L-isoaspartate alpha-methyl ester + S-adenosyl-L-homocysteine. Functionally, catalyzes the methyl esterification of L-isoaspartyl residues in peptides and proteins that result from spontaneous decomposition of normal L-aspartyl and L-asparaginyl residues. It plays a role in the repair and/or degradation of damaged proteins. The chain is Protein-L-isoaspartate O-methyltransferase from Cronobacter sakazakii (strain ATCC BAA-894) (Enterobacter sakazakii).